A 502-amino-acid chain; its full sequence is Maturase K (502 aa).

This sequence belongs to the intron maturase 2 family. MatK subfamily.

The protein localises to the plastid. It is found in the chloroplast. Functionally, usually encoded in the trnK tRNA gene intron. Probably assists in splicing its own and other chloroplast group II introns. The sequence is that of Maturase K from Sisymbrium irio (London rocket).